Consider the following 63-residue polypeptide: Muscarinic toxin 2 (63 aa).

Disulfide bonds link Cys3/Cys22, Cys17/Cys42, Cys44/Cys55, and Cys56/Cys61.

The protein belongs to the three-finger toxin family. Short-chain subfamily. Type B muscarinic toxin sub-subfamily. Monomer. In terms of tissue distribution, expressed by the venom gland.

It is found in the secreted. Its function is as follows. Blocks M2 muscarinic acetylcholine receptors (CHRM2). Fully blocks the binding of N-methylscopolamine (NMS) and oxotremorine-M to M2 receptors, slightly increased NMS binding to M1 receptors. In Dendroaspis angusticeps (Eastern green mamba), this protein is Muscarinic toxin 2.